The following is a 160-amino-acid chain: Ribosomal RNA large subunit methyltransferase H (160 aa).

S-adenosyl-L-methionine is bound by residues Leu76, Gly108, and Leu127–Trp132.

Belongs to the RNA methyltransferase RlmH family. In terms of assembly, homodimer.

It localises to the cytoplasm. It carries out the reaction pseudouridine(1915) in 23S rRNA + S-adenosyl-L-methionine = N(3)-methylpseudouridine(1915) in 23S rRNA + S-adenosyl-L-homocysteine + H(+). Functionally, specifically methylates the pseudouridine at position 1915 (m3Psi1915) in 23S rRNA. This is Ribosomal RNA large subunit methyltransferase H from Rhizobium johnstonii (strain DSM 114642 / LMG 32736 / 3841) (Rhizobium leguminosarum bv. viciae).